Reading from the N-terminus, the 86-residue chain is Cell division topological specificity factor (86 aa).

The protein belongs to the MinE family.

Prevents the cell division inhibition by proteins MinC and MinD at internal division sites while permitting inhibition at polar sites. This ensures cell division at the proper site by restricting the formation of a division septum at the midpoint of the long axis of the cell. This chain is Cell division topological specificity factor, found in Polaromonas sp. (strain JS666 / ATCC BAA-500).